The sequence spans 286 residues: Formamidopyrimidine-DNA glycosylase (286 aa).

Catalysis depends on proline 2, which acts as the Schiff-base intermediate with DNA. The active-site Proton donor is the glutamate 3. The active-site Proton donor; for beta-elimination activity is lysine 60. DNA is bound by residues histidine 103, arginine 122, and arginine 167. The FPG-type zinc-finger motif lies at 252–286; the sequence is WVYRRNQKPCRKCGTLIEKTKVAGRSTHWCPNCQN. Arginine 276 (proton donor; for delta-elimination activity) is an active-site residue.

This sequence belongs to the FPG family. As to quaternary structure, monomer. The cofactor is Zn(2+).

The enzyme catalyses Hydrolysis of DNA containing ring-opened 7-methylguanine residues, releasing 2,6-diamino-4-hydroxy-5-(N-methyl)formamidopyrimidine.. The catalysed reaction is 2'-deoxyribonucleotide-(2'-deoxyribose 5'-phosphate)-2'-deoxyribonucleotide-DNA = a 3'-end 2'-deoxyribonucleotide-(2,3-dehydro-2,3-deoxyribose 5'-phosphate)-DNA + a 5'-end 5'-phospho-2'-deoxyribonucleoside-DNA + H(+). In terms of biological role, involved in base excision repair of DNA damaged by oxidation or by mutagenic agents. Acts as a DNA glycosylase that recognizes and removes damaged bases. Has a preference for oxidized purines, such as 7,8-dihydro-8-oxoguanine (8-oxoG). Has AP (apurinic/apyrimidinic) lyase activity and introduces nicks in the DNA strand. Cleaves the DNA backbone by beta-delta elimination to generate a single-strand break at the site of the removed base with both 3'- and 5'-phosphates. This is Formamidopyrimidine-DNA glycosylase from Prochlorococcus marinus (strain MIT 9211).